The following is a 176-amino-acid chain: Inner membrane-spanning protein YciB (176 aa).

The next 6 helical transmembrane spans lie at 3–23 (FLFD…WGIF), 24–44 (TATA…AFRH), 49–69 (TMLW…LVLH), 81–101 (LYWL…NNLI), 121–141 (VAWA…VHNF), and 149–169 (FKLF…SLWL).

Belongs to the YciB family.

It localises to the cell inner membrane. Its function is as follows. Plays a role in cell envelope biogenesis, maintenance of cell envelope integrity and membrane homeostasis. This is Inner membrane-spanning protein YciB from Burkholderia lata (strain ATCC 17760 / DSM 23089 / LMG 22485 / NCIMB 9086 / R18194 / 383).